Here is a 389-residue protein sequence, read N- to C-terminus: Curcumin synthase 1 (389 aa).

Cysteine 164 is an active-site residue.

This sequence belongs to the thiolase-like superfamily. Chalcone/stilbene synthases family. As to quaternary structure, homodimer. In terms of tissue distribution, expressed in both the leaf and rhizome, with higher expression in the rhizome.

The catalysed reaction is (E)-feruloylacetyl-CoA + (E)-feruloyl-CoA + H2O = curcumin + CO2 + 2 CoA. Its pathway is secondary metabolite biosynthesis; flavonoid biosynthesis. In terms of biological role, catalyzes the synthesis of curcumin by condensing feruloyl-CoA with a diketide-CoA in the curcuminoid biosynthesis. This chain is Curcumin synthase 1 (CURS1), found in Curcuma longa (Turmeric).